Reading from the N-terminus, the 271-residue chain is MASAGSLDVPERGHQRPFLIGVSGGTASGKSTVCEKIMELLGQNEVDHRQRKVVILSQDRFYKVLTPEQKARALKGQYNFDHPDAFDNELMDRTLTQILDGQIVAVPMYDFITHSRLPETTTVYPADVVLFEGILAFYNQEIRDMFQLKLFVDTDSDVRLSRRVLRDMKRGRDLEQILTQYTTFVKPAFEEFSLPTKKYADVIIPRGVDNMVAINLIVQHIQDILNGDICKWQRGVQNGRSQKRTLPGQGDSGGLLLQGKRTHLESSSRPH.

24-32 lines the ATP pocket; the sequence is GGTASGKST. Positions 81, 109, 114, 163, 172, and 180 each coordinate substrate. An ATP-binding site is contributed by aspartate 209. Residues 240 to 271 form a disordered region; that stretch reads RSQKRTLPGQGDSGGLLLQGKRTHLESSSRPH. Residues 246–259 show a composition bias toward low complexity; it reads LPGQGDSGGLLLQG. The segment covering 262–271 has biased composition (basic and acidic residues); the sequence is THLESSSRPH.

It belongs to the uridine kinase family.

It carries out the reaction uridine + ATP = UMP + ADP + H(+). It catalyses the reaction cytidine + ATP = CMP + ADP + H(+). The protein operates within pyrimidine metabolism; CTP biosynthesis via salvage pathway; CTP from cytidine: step 1/3. It participates in pyrimidine metabolism; UMP biosynthesis via salvage pathway; UMP from uridine: step 1/1. In terms of biological role, phosphorylates uridine and cytidine to uridine monophosphate and cytidine monophosphate. Does not phosphorylate deoxyribonucleosides or purine ribonucleosides. Can use ATP or GTP as a phosphate donor. This is Uridine-cytidine kinase 1-B (uck1-b) from Xenopus laevis (African clawed frog).